Consider the following 572-residue polypeptide: Proline--tRNA ligase (572 aa).

Belongs to the class-II aminoacyl-tRNA synthetase family. ProS type 1 subfamily. Homodimer.

It is found in the cytoplasm. It carries out the reaction tRNA(Pro) + L-proline + ATP = L-prolyl-tRNA(Pro) + AMP + diphosphate. Functionally, catalyzes the attachment of proline to tRNA(Pro) in a two-step reaction: proline is first activated by ATP to form Pro-AMP and then transferred to the acceptor end of tRNA(Pro). As ProRS can inadvertently accommodate and process non-cognate amino acids such as alanine and cysteine, to avoid such errors it has two additional distinct editing activities against alanine. One activity is designated as 'pretransfer' editing and involves the tRNA(Pro)-independent hydrolysis of activated Ala-AMP. The other activity is designated 'posttransfer' editing and involves deacylation of mischarged Ala-tRNA(Pro). The misacylated Cys-tRNA(Pro) is not edited by ProRS. In Escherichia coli O139:H28 (strain E24377A / ETEC), this protein is Proline--tRNA ligase.